The chain runs to 261 residues: Proliferating cell nuclear antigen (261 aa).

The DNA-binding element occupies 61–80 (RCDRNQSIGVKMSSMSKILK). A Glycyl lysine isopeptide (Lys-Gly) (interchain with G-Cter in ubiquitin) cross-link involves residue Lys-164.

Belongs to the PCNA family. In terms of assembly, homotrimer. Forms a complex with activator 1 heteropentamer in the presence of ATP. Component of the replisome complex. Interacts with apex2.L (via PIP box and GRF-type Zinc finger domain); the interaction is required for 3'-5' single-strand break (SSB) end resection, assembly of a checkpoint protein complex to SSB sites, and SSB signaling. Monoubiquitinated by the ube2b-rad18 complex on Lys-164. Monoubiquitination at Lys-164 also takes place in undamaged proliferating cells, and is mediated by the dcx(dtl) complex, leading to enhance PCNA-dependent translesion DNA synthesis.

It is found in the nucleus. Functionally, this protein is an auxiliary protein of DNA polymerase delta and is involved in the control of eukaryotic DNA replication by increasing the polymerase's processibility during elongation of the leading strand. Promotes 3'-5' nuclease activity of the DNA-endonuclease apex2.L in response to DNA damage. The protein is Proliferating cell nuclear antigen (pcna) of Xenopus laevis (African clawed frog).